The sequence spans 253 residues: MFRLFHNQQKAKTKLKVLLIFQLSVIFSLTAAICLQFSDDTSAAFHDIETFDVSLQTCKDFQHTDKNCHYDKRWDQSDLHISDQTDTKGTVCSPFALFAVLENTGEKLKKSKWKWELHKLENARKPLKDGNVIEKGFVSNQIGDSLYKIETKKKMKPGIYAFKVYKPAGYPANGSTFEWSEPMRLAKCDEKPTVPKKETKSDVKKENETTQKDIPEKTMKEETSQEAVTKEKETQSDQKESGEEDEKSNEADQ.

A signal peptide spans 1–32 (MFRLFHNQQKAKTKLKVLLIFQLSVIFSLTAA). The interval 50–57 (TFDVSLQT) is important for TasA fiber formation. Residues 190–241 (EKPTVPKKETKSDVKKENETTQKDIPEKTMKEETSQEAVTKEKETQSDQKES) show a composition bias toward basic and acidic residues. The disordered stretch occupies residues 190–253 (EKPTVPKKET…EDEKSNEADQ (64 aa)).

Its subcellular location is the secreted. The protein resides in the cell wall. Required for biofilm formation. Required for the proper anchoring and polymerization of TasA amyloid fibers at the cell surface. Is also a minor component of TasA fibers. The chain is TasA anchoring/assembly protein from Bacillus subtilis (strain 168).